The chain runs to 589 residues: EZH inhibitory protein (589 aa).

Disordered stretches follow at residues 1-46 (MASS…LRLR), 61-548 (AGED…SGPN), and 561-589 (LDSS…KCRG). Composition is skewed to gly residues over residues 29-38 (GPRGRGGPSG) and 105-114 (PKGGGKADQG). Positions 147–161 (GAAGPPLPGARGSPA) are enriched in low complexity. Residues 193 to 204 (LRSSTSQGSGST) show a composition bias toward polar residues. 4 stretches are compositionally biased toward low complexity: residues 299–308 (RSSASAVSPE), 325–334 (RSSASVVSPE), 351–360 (RSSASVVSPE), and 374–390 (PRAT…TTRS). Ser306 carries the phosphoserine modification. A compositionally biased stretch (basic and acidic residues) spans 426–437 (MRLDLQVDREPE). The segment covering 438-449 (SEAEQEEQELES) has biased composition (acidic residues). Low complexity predominate over residues 450–465 (EPGPSSRPQASRSSSR). Residues 482-490 (RRPVRMRAS) form a sufficient for interaction with EZH2 region. Residues 484–503 (PVRMRASSPSPPGRLYPLPK) are necessary and sufficient for inhibition of PRC2/EED-EZH1 and PRC2/EED-EZH2 complex activity. A compositionally biased stretch (low complexity) spans 509-547 (VHSPSSSSSESSSVSSSHSPLNKAPDPGSSPPLSSLSGP). The span at 575 to 589 (AAPHTREEEDKKCRG) shows a compositional bias: basic and acidic residues.

In terms of assembly, interacts with PRC2/EED-EZH1 complex member EZH1 and with PRC2/EED-EZH2 complex member EZH2; the interaction blocks EZH1/EZH2 methyltransferase activity. Interacts (via C-terminus) with SUZ12 which is a member of the PRC2/EED-EZH1 and PRC2/EED-EZH2 complexes. In terms of tissue distribution, highly expressed in ovary with lower expression in testis and very low levels in other tissues tested including prostate, brain, kidney, spleen and liver. During spermatogenesis, expressed mainly in spermatogonia with very low expression in spermatocytes I and II.

The protein localises to the nucleus. Its subcellular location is the cytoplasm. Functionally, inhibits PRC2/EED-EZH1 and PRC2/EED-EZH2 complex function by inhibiting EZH1/EZH2 methyltransferase activity, thereby causing down-regulation of histone H3 trimethylation at 'Lys-27' (H3K27me3). Probably inhibits methyltransferase activity by limiting the stimulatory effect of cofactors such as AEBP2 and JARID2. Inhibits H3K27me3 deposition during spermatogenesis and oogenesis. The sequence is that of EZH inhibitory protein from Mus musculus (Mouse).